A 253-amino-acid chain; its full sequence is MFMLRVSRRGLATATSVPRLKTFKIYRWNPDKPTEKPHLQEYKVDLEDCGPMVLDALLKIKNEQDATLTFRRSCREGICGSCAMNIGGANTLACLCKIDQDESKTTKIYPLPHMFIVKDLVPDLTGFYQQYKSIQPYLQRTDYPADGKEVLQSIDDRKKLDGLYECILCACCSTSCPSYWWNQEEYLGPAVLMQAYRWLIDSRDQATKARRTMLQNSMSLYRCHTIMNCTRTCPKGLNPGRSIAEIKKQLAFD.

One can recognise a 2Fe-2S ferredoxin-type domain in the interval 23–114 (FKIYRWNPDK…TTKIYPLPHM (92 aa)). [2Fe-2S] cluster is bound by residues Cys74, Cys79, Cys82, and Cys94. The 31-residue stretch at 156-186 (DRKKLDGLYECILCACCSTSCPSYWWNQEEY) folds into the 4Fe-4S ferredoxin-type domain. Cys166, Cys169, and Cys172 together coordinate [4Fe-4S] cluster. [3Fe-4S] cluster is bound at residue Cys176. Residue Trp181 participates in a ubiquinone binding. [3Fe-4S] cluster contacts are provided by Cys223 and Cys229. Cys233 lines the [4Fe-4S] cluster pocket.

The protein belongs to the succinate dehydrogenase/fumarate reductase iron-sulfur protein family. In terms of assembly, component of complex II composed of four subunits: a flavoprotein (FP), an iron-sulfur protein (IP), and a cytochrome b composed of a large and a small subunit. It depends on [2Fe-2S] cluster as a cofactor. The cofactor is [3Fe-4S] cluster. [4Fe-4S] cluster is required as a cofactor.

It is found in the mitochondrion inner membrane. It carries out the reaction a quinone + succinate = fumarate + a quinol. It functions in the pathway carbohydrate metabolism; tricarboxylic acid cycle; fumarate from succinate (eukaryal route): step 1/1. Its function is as follows. Iron-sulfur protein (IP) subunit of succinate dehydrogenase (SDH) that is involved in complex II of the mitochondrial electron transport chain and is responsible for transferring electrons from succinate to ubiquinone (coenzyme Q). In Candida glabrata (strain ATCC 2001 / BCRC 20586 / JCM 3761 / NBRC 0622 / NRRL Y-65 / CBS 138) (Yeast), this protein is Succinate dehydrogenase [ubiquinone] iron-sulfur subunit, mitochondrial (SDH2).